Here is a 1419-residue protein sequence, read N- to C-terminus: MGKEQKEKKDGNLSIKEEVEKELNKKSTAELFRKIKNEKISFFLPFKCLPAQHRKLLFISFVCAVLSGGTLPFFISVFGVILKNMNLGDDINPIILSLVSIGLVQFILSMISSYCMDVITSKILKTLKLEYLRSVFYQDGQFHDNNPGSKLRSDLDFYLEQVSSGIGTKFITIFTYASSFLGLYIWSLIKNARLTLCITCVFPLIYVCGVICNKKVKLNKKTSLLYNNNTMSIIEEALMGIRTVASYCGEKTILNKFNLSETFYSKYILKANFVEALHIGLINGLILVSYAFGFWYGTRIIINSATNQYPNNDFNGASVISILLGVLISMFMLTIILPNITEYMKALEATNSLYEIINRKPLVENNDDGETLPNIKKIEFKNVRFHYDTRKDVEIYKDLSFTLKEGKTYAFVGESGCGKSTILKLIERLYDPTEGDIIVNDSHNLKDINLKWWRSKIGVVSQDPLLFSNSIKNNIKYSLYSLKDLEAMENYYEENTNDTYENKNFSLISNSMTSNELLEMKKEYQTIKDSDVVDVSKKVLIHDFVSSLPDKYDTLVGSNASKLSGGQKQRISIARAIMRNPKILILDEATSSLDNKSEYLVQKTINNLKGNENRITIIIAHRLSTIRYANTIFVLSNRERSDNNNNNNNDDNNNNNNNNNNKINNEGSYIIEQGTHDSLMKNKNGIYHLMINNQKISSNKSSNNGNDNGSDNKSSAYKDSDTGNDADNMNSLSIHENENISNNRNCKNTAENEKEEKVPFFKRMFRRKKKAPNNLRIIYKEIFSYKKDVTIIFFSILVAGGLYPVFALLYARYVSTLFDFANLEYNSNKYSIYILLIAIAMFISETLKNYYNNKIGEKVEKTMKRRLFENILYQEMSFFDQDKNTPGVLSAHINRDVHLLKTGLVNNIVIFSHFIMLFLVSMVMSFYFCPIVAAVLTFIYFINMRVFAVRARLTKSKEIEKKENMSSGVFAFSSDDEMFKDPSFLIQEAFYNMHTVINYGLEDYFCNLIEKAIDYKNKGQKRRIIVNAALWGFSQSAQLFINSFAYWFGSFLIKRGTILVDDFMKSLFTFIFTGSYAGKLMSLKGDSENAKLSFEKYYPLMIRKSNIDVRDDGGIRINKNLIKGKVDIKDVNFRYISRPNVPIYKNLSFTCDSKKTTAIVGETGSGKSTFMNLLLRFYDLKNDHIILKNDMTNFQDYQNNNNNSLVLKNVNEFSNQSGSAEDYTVFNNNGEILLDDINICDYNLRDLRNLFSIVSQEPMLFNMSIYENIKFGREDATLEDVKRVSKFAAIDEFIESLPNKYDTNVGPYGKSLSGGQKQRIAIARALLREPKILLLDEATSSLDSNSEKLIEKTIVDIKDKADKTIITIAHRIASIKRSDKIVVFNNPDRNGTFVQSHGTHDELLSAQDGIYKKYVKLAK.

The interval 1 to 37 is r domain; regulates transporter activity; it reads MGKEQKEKKDGNLSIKEEVEKELNKKSTAELFRKIKN. Over 1 to 60 the chain is Cytoplasmic; it reads MGKEQKEKKDGNLSIKEEVEKELNKKSTAELFRKIKNEKISFFLPFKCLPAQHRKLLFIS. An ABC transmembrane type-1 1 domain is found at 58 to 345; the sequence is FISFVCAVLS…ILPNITEYMK (288 aa). A helical transmembrane segment spans residues 61–81; it reads FVCAVLSGGTLPFFISVFGVI. The Vacuolar portion of the chain corresponds to 82–90; sequence LKNMNLGDD. Residues 91-111 traverse the membrane as a helical segment; sequence INPIILSLVSIGLVQFILSMI. At 112 to 168 the chain is on the cytoplasmic side; that stretch reads SSYCMDVITSKILKTLKLEYLRSVFYQDGQFHDNNPGSKLRSDLDFYLEQVSSGIGT. The chain crosses the membrane as a helical span at residues 169-189; sequence KFITIFTYASSFLGLYIWSLI. The Vacuolar segment spans residues 190 to 191; the sequence is KN. The helical transmembrane segment at 192–212 threads the bilayer; that stretch reads ARLTLCITCVFPLIYVCGVIC. At 213–275 the chain is on the cytoplasmic side; that stretch reads NKKVKLNKKT…KYILKANFVE (63 aa). Residues 276 to 296 form a helical membrane-spanning segment; that stretch reads ALHIGLINGLILVSYAFGFWY. The Vacuolar portion of the chain corresponds to 297 to 316; sequence GTRIIINSATNQYPNNDFNG. Residues 317–337 form a helical membrane-spanning segment; the sequence is ASVISILLGVLISMFMLTIIL. At 338 to 788 the chain is on the cytoplasmic side; that stretch reads PNITEYMKAL…YKEIFSYKKD (451 aa). The ABC transporter 1 domain maps to 378–662; sequence IEFKNVRFHY…NNNNNNNNNK (285 aa). Y387, T389, R390, S415, C417, G418, K419, S420, T421, Q462, K562, S564, G566, and Q567 together coordinate ATP. Q462 contacts Mg(2+). Disordered regions lie at residues 639–665 and 697–752; these read ERSDNNNNNNNDDNNNNNNNNNNKINN and SSNK…TAEN. Composition is skewed to low complexity over residues 643 to 665 and 697 to 715; these read NNNNNNNDDNNNNNNNNNNKINN and SSNKSSNNGNDNGSDNKSS. The segment covering 723–749 has biased composition (polar residues); that stretch reads GNDADNMNSLSIHENENISNNRNCKNT. The helical transmembrane segment at 789–809 threads the bilayer; it reads VTIIFFSILVAGGLYPVFALL. The region spanning 791-1083 is the ABC transmembrane type-1 2 domain; it reads IIFFSILVAG…GSYAGKLMSL (293 aa). Over 810–829 the chain is Vacuolar; sequence YARYVSTLFDFANLEYNSNK. A helical transmembrane segment spans residues 830–850; the sequence is YSIYILLIAIAMFISETLKNY. At 851 to 907 the chain is on the cytoplasmic side; that stretch reads YNNKIGEKVEKTMKRRLFENILYQEMSFFDQDKNTPGVLSAHINRDVHLLKTGLVNN. 2 helical membrane passes run 908–928 and 929–949; these read IVIFSHFIMLFLVSMVMSFYF and CPIVAAVLTFIYFINMRVFAV. Topologically, residues 950 to 1032 are cytoplasmic; that stretch reads RARLTKSKEI…RIIVNAALWG (83 aa). Residues 1033-1053 form a helical membrane-spanning segment; sequence FSQSAQLFINSFAYWFGSFLI. Topologically, residues 1054-1057 are vacuolar; the sequence is KRGT. The helical transmembrane segment at 1058 to 1078 threads the bilayer; sequence ILVDDFMKSLFTFIFTGSYAG. At 1079 to 1419 the chain is on the cytoplasmic side; sequence KLMSLKGDSE…IYKKYVKLAK (341 aa). In terms of domain architecture, ABC transporter 2 spans 1126–1416; it reads VDIKDVNFRY…QDGIYKKYVK (291 aa). 13 residues coordinate ATP: Y1135, R1138, T1163, G1164, G1166, K1167, S1168, T1169, Q1256, L1312, S1313, G1315, and Q1316. S1168 is a Mg(2+) binding site. Position 1256 (Q1256) interacts with Mg(2+).

Belongs to the ABC transporter superfamily. ABCB family. Multidrug resistance exporter (TC 3.A.1.201) subfamily.

The protein localises to the vacuole membrane. The enzyme catalyses ATP + H2O + xenobioticSide 1 = ADP + phosphate + xenobioticSide 2.. Energy-dependent efflux pump responsible for decreased drug accumulation in multidrug-resistant cells. Transports lumefantrine, mefloquine, chloroquine, quinine, quinidine, amodiaquine, piperaquine, dihydroartemisinin and quinacrine. The sequence is that of Multidrug resistance protein 1 from Plasmodium falciparum (isolate 3D7).